A 2692-amino-acid chain; its full sequence is Thyroglobulin (2692 aa).

The N-terminal stretch at 1–19 (MALALWVFALLGSACLVSA) is a signal peptide. Tyr-24 bears the Iodotyrosine; alternate mark. Tyr-24 bears the Sulfotyrosine; alternate mark. Tyr-24 carries the post-translational modification Thyroxine; alternate. At Tyr-24 the chain carries Triiodothyronine; alternate. Thyroglobulin type-1 domains lie at 31–92 (LRPC…PVAC), 93–160 (LSFC…PARC), and 161–248 (PGSC…LAGT). 8 cysteine pairs are disulfide-bonded: Cys-34-Cys-52, Cys-63-Cys-70, Cys-72-Cys-92, Cys-96-Cys-120, Cys-131-Cys-138, Cys-140-Cys-160, Cys-164-Cys-183, and Cys-194-Cys-235. Tyr-108 carries the iodotyrosine modification. Residue Asn-110 is glycosylated (N-linked (GlcNAc...) asparagine). Iodotyrosine; alternate is present on Tyr-149. A Diiodotyrosine; alternate modification is found at Tyr-149. A glycan (N-linked (GlcNAc...) asparagine) is linked at Asn-198. Residues Tyr-234 and Tyr-258 each carry the iodotyrosine modification. The 61-residue stretch at 298-358 (PTKCEVERFA…TRRPSEPLSC (61 aa)) folds into the Thyroglobulin type-1 4 domain. Cystine bridges form between Cys-301–Cys-319, Cys-330–Cys-336, Cys-338–Cys-358, Cys-364–Cys-621, Cys-408–Cys-609, Cys-632–Cys-637, Cys-639–Cys-659, Cys-663–Cys-688, and Cys-699–Cys-704. N-linked (GlcNAc...) asparagine glycans are attached at residues Asn-485, Asn-497, and Asn-546. Thyroglobulin type-1 domains follow at residues 606–659 (SQGC…RPRC), 660–727 (PTAC…PKQC), and 728–923 (PTPC…VPAC). Tyr-705 carries the iodotyrosine; alternate modification. Position 705 is a thyroxine; alternate (Tyr-705). Tyr-705 bears the Triiodothyronine; alternate mark. Tyr-705 carries the diiodotyrosine; alternate modification. Intrachain disulfides connect Cys-706–Cys-727, Cys-731–Cys-764, Cys-775–Cys-900, Cys-902–Cys-923, Cys-927–Cys-1033, Cys-1044–Cys-1051, Cys-1053–Cys-1079, Cys-1128–Cys-1147, Cys-1151–Cys-1171, Cys-1183–Cys-1190, Cys-1192–Cys-1212, Cys-1237–Cys-1287, and Cys-1262–Cys-1278. A glycan (N-linked (GlcNAc...) asparagine) is linked at Asn-749. Tyr-786 bears the Iodotyrosine mark. Asn-855 is a glycosylation site (N-linked (GlcNAc...) asparagine). Tyr-868 carries the iodotyrosine; alternate modification. The residue at position 868 (Tyr-868) is a Diiodotyrosine; alternate. Residue Tyr-885 is modified to Diiodotyrosine. N-linked (GlcNAc...) asparagine glycosylation occurs at Asn-949. Iodotyrosine; alternate is present on Tyr-994. At Tyr-994 the chain carries Diiodotyrosine; alternate. 3 Thyroglobulin type-1 domains span residues 1021–1079 (SGPL…PTPC), 1088–1147 (LSAW…SAPC), and 1148–1212 (PGLC…QPAC). Asn-1142 carries an N-linked (GlcNAc...) asparagine glycan. Tyr-1241 is modified (iodotyrosine). The residue at position 1241 (Tyr-1241) is a Thyroxine. N-linked (GlcNAc...) asparagine glycans are attached at residues Asn-1296 and Asn-1384. Cystine bridges form between Cys-1372–Cys-1392, Cys-1395–Cys-1406, Cys-1409–Cys-1423, Cys-1426–Cys-1443, Cys-1447–Cys-1456, Cys-1476–Cys-1498, Cys-1535–Cys-1559, Cys-1539–Cys-1545, Cys-1571–Cys-1594, Cys-1656–Cys-1681, Cys-1660–Cys-1666, Cys-1665–Cys-1766, and Cys-1692–Cys-1709. Type II repeat units follow at residues 1389–1402 (PLGC…SYFQ), 1403–1419 (EEQC…EQTG), and 1420–1436 (SLAC…TSVG). An Iodotyrosine; alternate modification is found at Tyr-1400. Residue Tyr-1400 is modified to Diiodotyrosine; alternate. The 55-residue stretch at 1444–1498 (VTACQRDEAGLQCDQDGQYRASQRDRASGKAFCVDSEGRRLPWSETQAPLVDAQC) folds into the Thyroglobulin type-1 11 domain. A Type IIIA repeat occupies 1535–1655 (CLADCARDEA…GASLTEAHLF (121 aa)). Residues 1656–1823 (CLLACDRDSC…LFSLQQAHLW (168 aa)) form a Type IIIB repeat. Residue Asn-1800 is glycosylated (N-linked (GlcNAc...) asparagine). Intrachain disulfides connect Cys-1824–Cys-1850, Cys-1828–Cys-1835, Cys-1859–Cys-1870, Cys-1927–Cys-1955, Cys-1931–Cys-1937, Cys-1936–Cys-2007, Cys-1966–Cys-1979, Cys-2061–Cys-2085, Cys-2065–Cys-2071, and Cys-2094–Cys-2103. The stretch at 1824-1926 (CLSRCVQEPS…DKAISSGFFE (103 aa)) is one Type IIIA repeat. A Type IIIB repeat occupies 1927 to 2060 (CERLCDVDPC…VGDFSAARER (134 aa)). Asn-1944 is a glycosylation site (N-linked (GlcNAc...) asparagine). Residues 2061–2118 (CLLECSRHQACLVTTLQTRPGAVRCMFYADTQSCTHSLQAQNCQLLLREEATHIYRKP) form a Type IIIA repeat. An Iodotyrosine modification is found at Tyr-2115. The tract at residues 2119-2692 (DIPLPGLGSS…PELASKSYSK (574 aa)) is cholinesterase-like (ChEL). 2 N-linked (GlcNAc...) asparagine glycosylation sites follow: Asn-2181 and Asn-2226. The residue at position 2467 (Tyr-2467) is a Thyroxine. The residue at position 2500 (Tyr-2500) is an Iodotyrosine; alternate. Position 2500 is a thyroxine; alternate (Tyr-2500). At Tyr-2500 the chain carries Triiodothyronine; alternate. Tyr-2500 bears the Diiodotyrosine; alternate mark. Iodotyrosine is present on residues Tyr-2514 and Tyr-2544. Cysteines 2518 and 2642 form a disulfide. A Diiodotyrosine modification is found at Tyr-2624. Over residues 2658 to 2671 (EAEDGPLAESEEED) the composition is skewed to acidic residues. Residues 2658–2692 (EAEDGPLAESEEEDRPGLTEDLLGLPELASKSYSK) are disordered. Tyr-2690 carries the post-translational modification Iodotyrosine; alternate. At Tyr-2690 the chain carries Thyroxine; alternate. A Triiodothyronine; alternate modification is found at Tyr-2690. Tyr-2690 bears the Diiodotyrosine; alternate mark.

It belongs to the type-B carboxylesterase/lipase family. Monomer. Homodimer (via ChEL region); occurs in the endoplasmic reticulum and is required for export to the Golgi apparatus. Homooligomer; disulfide-linked; stored in this form in the thyroid follicle lumen. Post-translationally, iodinated on tyrosine residues by TPO. There are 4 pairs of iodinated tyrosines used for coupling: acceptor Tyr-24 is coupled to donor Tyr-149 or Tyr-234, acceptor Tyr-2500 is coupled to donor Tyr-2467, acceptor Tyr-2690 in monomer 1 is coupled to donor Tyr-2690 in monomer 2 and acceptor Tyr-1241 in monomer 1 is coupled to donor Tyr-108 in monomer 2. In terms of processing, sulfated tyrosines are desulfated during iodination. Undergoes sequential proteolysis by cathepsins to release thyroxine (T4) and triiodothyronine (T3) hormones. In the thyroid follicle lumen, cross-linked TG (storage form) is solubilized by limited proteolysis mediated by cathepsins CTSB and/or CTSL. Partially cleaved TG is further processed by CTSK/cathepsin K and/or CTSL resulting in the release of T4. Following endocytosis, further processing occurs leading to the release of T3 and more T4 hormones. In terms of tissue distribution, expressed in thyroid epithelial cells.

Its subcellular location is the secreted. Acts as a substrate for the production of iodinated thyroid hormones thyroxine (T4) and triiodothyronine (T3). The synthesis of T3 and T4 involves iodination of selected tyrosine residues of TG/thyroglobulin followed by their oxidative coupling. Following TG re-internalization and lysosomal-mediated proteolysis, T3 and T4 are released from the polypeptide backbone leading to their secretion into the bloodstream. One dimer produces 7 thyroid hormone molecules. The chain is Thyroglobulin from Sus scrofa (Pig).